The chain runs to 407 residues: E3 ubiquitin-protein ligase TRIM13 (407 aa).

Residues 10–58 form an RING-type zinc finger; sequence CPICCSLFDDPRVLPCSHNFCKKCLEGLLEGNVRNSLWRPSPFKCPTCR. The B box-type zinc finger occupies 89-131; that stretch reads PKMPVCKGHLGQPLNIFCVTDMQLICGICATRGEHTKHVFSSI. Residues cysteine 94, histidine 97, cysteine 117, and histidine 123 each coordinate Zn(2+). A coiled-coil region spans residues 172 to 200; sequence LQLLTKDSDKVKEFFEKLQHTLDQKKNEI. A helical membrane pass occupies residues 316-336; the sequence is LLLMMVVLLGLLIFFGPTVFL.

It belongs to the TRIM/RBCC family. As to quaternary structure, interacts (via C-terminal domain) with VCP. Interacts with AKT1; the interaction ubiquitinates AKT1 and leads to its proteasomal degradation. Interacts with MDM2; the interaction ubiquitinates AKT1 and leads to its proteasomal degradation. Interacts with p62/SQSTM1. Interacts with TRAF6. Interacts with IKBKG/NEMO. Auto-ubiquitinated; requires the RING-type zinc finger. Auto-polyubiquitination leads to proteasomal degradation.

The protein localises to the endoplasmic reticulum membrane. The enzyme catalyses S-ubiquitinyl-[E2 ubiquitin-conjugating enzyme]-L-cysteine + [acceptor protein]-L-lysine = [E2 ubiquitin-conjugating enzyme]-L-cysteine + N(6)-ubiquitinyl-[acceptor protein]-L-lysine.. It participates in protein modification; protein ubiquitination. Its function is as follows. Endoplasmic reticulum (ER) membrane anchored E3 ligase involved in the retrotranslocation and turnover of membrane and secretory proteins from the ER through a set of processes named ER-associated degradation (ERAD). This process acts on misfolded proteins as well as in the regulated degradation of correctly folded proteins. Enhances ionizing radiation-induced p53/TP53 stability and apoptosis via ubiquitinating MDM2 and AKT1 and decreasing AKT1 kinase activity through MDM2 and AKT1 proteasomal degradation. Regulates ER stress-induced autophagy, and may act as a tumor suppressor. Also plays a role in innate immune response by stimulating NF-kappa-B activity in the TLR2 signaling pathway. Ubiquitinates TRAF6 via the 'Lys-29'-linked polyubiquitination chain resulting in NF-kappa-B activation. Participates as well in T-cell receptor-mediated NF-kappa-B activation. In the presence of TNF, modulates the IKK complex by regulating IKBKG/NEMO ubiquitination leading to the repression of NF-kappa-B. This Mus musculus (Mouse) protein is E3 ubiquitin-protein ligase TRIM13 (Trim13).